Here is a 140-residue protein sequence, read N- to C-terminus: 3-hydroxyacyl-[acyl-carrier-protein] dehydratase FabZ (140 aa).

Histidine 47 is an active-site residue.

The protein belongs to the thioester dehydratase family. FabZ subfamily.

The protein localises to the cytoplasm. It catalyses the reaction a (3R)-hydroxyacyl-[ACP] = a (2E)-enoyl-[ACP] + H2O. Involved in unsaturated fatty acids biosynthesis. Catalyzes the dehydration of short chain beta-hydroxyacyl-ACPs and long chain saturated and unsaturated beta-hydroxyacyl-ACPs. This is 3-hydroxyacyl-[acyl-carrier-protein] dehydratase FabZ from Streptococcus agalactiae serotype III (strain NEM316).